The chain runs to 298 residues: NFU1 iron-sulfur cluster scaffold homolog, mitochondrial (298 aa).

The segment at 194–262 (IKELLDTRIR…IPEVESVEQV (69 aa)) is nifU. Cysteine 231 and cysteine 234 together coordinate [4Fe-4S] cluster.

This sequence belongs to the NifU family.

The protein resides in the mitochondrion. Its function is as follows. Molecular scaffold for [Fe-S] cluster assembly of mitochondrial iron-sulfur proteins. This is NFU1 iron-sulfur cluster scaffold homolog, mitochondrial from Drosophila grimshawi (Hawaiian fruit fly).